Here is a 981-residue protein sequence, read N- to C-terminus: NAD(+) hydrolase tir-1 (981 aa).

Disordered regions lie at residues 1–31, 74–128, and 173–225; these read MLPN…RSLK, QNEQ…PTQP, and LSTP…PVDQ. 2 stretches are compositionally biased toward polar residues: residues 12–23 and 74–85; these read PSFQSLNNNNQR and QNEQDGETTSTD. The segment covering 87–97 has biased composition (acidic residues); it reads AFFELDDDDDL. A compositionally biased stretch (low complexity) spans 98–114; sequence SSPSVPGSPVDPPSISV. Over residues 115–128 the composition is skewed to pro residues; that stretch reads PLPPKSAPPCPTQP. The segment covering 182-200 has biased composition (basic and acidic residues); it reads EEMHNGQVRKESEYRRFKS. SAM domains lie at 614-678 and 684-750; these read WTCA…LKVA and VDES…AKHP. One can recognise a TIR domain in the interval 760–857; it reads KQIDVFISYR…EHQKNIIPIF (98 aa). Residue 769–770 participates in NAD(+) binding; that stretch reads RR. E842 is an active-site residue. Polar residues-rich tracts occupy residues 908 to 939, 954 to 963, and 972 to 981; these read TTPT…TGPS, FTPTGSQERA, and PSASTTSDRN. A disordered region spans residues 908–981; sequence TTPTTKEMPS…PSASTTSDRN (74 aa).

The protein belongs to the SARM1 family. Homodimer. Interacts with rab-1, pal-1 and unc-43. In terms of tissue distribution, highly expressed in hypodermis. Localizes to postsynaptic regions of axons.

It localises to the cytoplasm. It catalyses the reaction NAD(+) + H2O = ADP-D-ribose + nicotinamide + H(+). Functionally, NAD(+) hydrolase, which plays a key role in non-apoptotic cell death by regulating NAD(+) metabolism. In response to stress, homooligomerizes and catalyzes cleavage of NAD(+) into ADP-D-ribose (ADPR) and nicotinamide; NAD(+) cleavage promoting non-apoptotic neuronal cell death. In males, involved in non-apoptotic death of the linker cell which guides gonad elongation during larval development. Required for both innate immune response and specification of AWC(OFF) neuron. During late embryogenesis, it acts downstream of CAMKII (unc-43) to regulate specification of asymmetric odorant receptors in AWC(OFF) neuron via the nsy-1/ASK1 pmk-1/p38 MAP kinase signaling cascade. Required to localize nsy-1 to postsynaptic regions of AWC neuron, suggesting that it may act by assembling a signaling complex that regulate odorant receptor expression. Also plays a central role in resistance to infection to a broad range of bacterial and fungi pathogens, possibly by activating pmk-1, independently of the NF-kappa-B pathway. Required for expression of antimicrobial peptides nlp-29 and nlp-31. Its role in immune response and neuron specification may be mediated by the same nsy-1/ASK1 pmk-1/p38 MAP kinase cascade signaling pathway. Involved in the response to anoxic conditions probably by activating the p38 pathway composed of nsy-1/sek-1/pmk-1. Involved in regulation of the serotonergic response of ADF neurons to pathogenic food. In addition, plays a role in the up-regulation of gcs-1 upon arsenite treatment, most likely through activation of pmk-1, to confer protection against toxicity induced by heavy metals. Its function is as follows. Regulates expression of antimicrobial peptide nlp-29 in response to fungal infection or physical injury. The polypeptide is NAD(+) hydrolase tir-1 (Caenorhabditis elegans).